A 203-amino-acid chain; its full sequence is MGSRRAGSSSSPLFWPAPPSRAADPPPVHDTDGHELRADANYYVLSANRAHGGGLTMAPGHGRHCPLFVSQDPNGQHDGFPVRITPYGVAPSDKIIRLSTDVRISFRAYTTCLQSTEWHIDSELAAGRRHVITGPVKDPSPSGRENAFRIEKYSGAEVHEYKLMSCGDWCQDLGVFRDLKGGAWFLGATEPYHVVVFKKAPPA.

Residues 1-12 are compositionally biased toward polar residues; the sequence is MGSRRAGSSSSP. An N-terminal signal peptide occupies residues 1–22; that stretch reads MGSRRAGSSSSPLFWPAPPSRA. The disordered stretch occupies residues 1–34; it reads MGSRRAGSSSSPLFWPAPPSRAADPPPVHDTDGH. Positions 15-26 are enriched in pro residues; the sequence is WPAPPSRAADPP. 2 cysteine pairs are disulfide-bonded: C65–C112 and C166–C170.

It belongs to the protease inhibitor I3 (leguminous Kunitz-type inhibitor) family.

In terms of biological role, this protein inhibits independently subtilisin and alpha-amylase. In Hordeum vulgare (Barley), this protein is Alpha-amylase/subtilisin inhibitor.